The following is a 666-amino-acid chain: DNA mismatch repair protein MutL (666 aa).

It belongs to the DNA mismatch repair MutL/HexB family.

This protein is involved in the repair of mismatches in DNA. It is required for dam-dependent methyl-directed DNA mismatch repair. May act as a 'molecular matchmaker', a protein that promotes the formation of a stable complex between two or more DNA-binding proteins in an ATP-dependent manner without itself being part of a final effector complex. The sequence is that of DNA mismatch repair protein MutL from Clostridium botulinum (strain Okra / Type B1).